The following is a 445-amino-acid chain: Methionine aminopeptidase 2 (445 aa).

Positions 1–89 (MAAQAPVDEI…DPPRVLISQL (89 aa)) are disordered. Positions 60 to 74 (AKKKKKRKPKKKKKN) are enriched in basic residues. A substrate-binding site is contributed by His198. 3 residues coordinate a divalent metal cation: Asp218, Asp229, and His298. His306 is a binding site for substrate. A divalent metal cation-binding residues include Glu331 and Glu426.

This sequence belongs to the peptidase M24A family. Methionine aminopeptidase eukaryotic type 2 subfamily. The cofactor is Co(2+). It depends on Zn(2+) as a cofactor. Mn(2+) is required as a cofactor. Fe(2+) serves as cofactor.

The protein localises to the cytoplasm. It carries out the reaction Release of N-terminal amino acids, preferentially methionine, from peptides and arylamides.. Cotranslationally removes the N-terminal methionine from nascent proteins. The N-terminal methionine is often cleaved when the second residue in the primary sequence is small and uncharged (Met-Ala-, Cys, Gly, Pro, Ser, Thr, or Val). The protein is Methionine aminopeptidase 2 of Podospora anserina (strain S / ATCC MYA-4624 / DSM 980 / FGSC 10383) (Pleurage anserina).